Here is a 107-residue protein sequence, read N- to C-terminus: Thiosulfate sulfurtransferase GlpE (107 aa).

Residues 17–105 form the Rhodanese domain; it reads ADDNALLVDI…WRIAFPQQVS (89 aa). Catalysis depends on Cys-65, which acts as the Cysteine persulfide intermediate.

This sequence belongs to the GlpE family.

It is found in the cytoplasm. It carries out the reaction thiosulfate + hydrogen cyanide = thiocyanate + sulfite + 2 H(+). The catalysed reaction is thiosulfate + [thioredoxin]-dithiol = [thioredoxin]-disulfide + hydrogen sulfide + sulfite + 2 H(+). Transferase that catalyzes the transfer of sulfur from thiosulfate to thiophilic acceptors such as cyanide or dithiols. May function in a CysM-independent thiosulfate assimilation pathway by catalyzing the conversion of thiosulfate to sulfite, which can then be used for L-cysteine biosynthesis. The sequence is that of Thiosulfate sulfurtransferase GlpE from Erwinia tasmaniensis (strain DSM 17950 / CFBP 7177 / CIP 109463 / NCPPB 4357 / Et1/99).